Reading from the N-terminus, the 412-residue chain is Adipocyte plasma membrane-associated protein (412 aa).

Positions 1–32 are disordered; the sequence is MTEADGLRQRRPLRPQVVTDDNRTPEAKGGSS. Residues 1 to 39 are Cytoplasmic-facing; the sequence is MTEADGLRQRRPLRPQVVTDDNRTPEAKGGSSFSGRVFR. Phosphothreonine is present on T19. Residues 40-60 traverse the membrane as a helical segment; that stretch reads ATFLMLAAFLTIPLLGALVLL. At 61–412 the chain is on the extracellular side; the sequence is DSPIDPEPLS…RAPYLCRLRL (352 aa). An N-linked (GlcNAc...) asparagine glycan is attached at N159.

It belongs to the strictosidine synthase family.

The protein resides in the membrane. In terms of biological role, exhibits strong arylesterase activity with beta-naphthyl acetate and phenyl acetate. May play a role in adipocyte differentiation. The sequence is that of Adipocyte plasma membrane-associated protein (APMAP) from Bos taurus (Bovine).